Consider the following 265-residue polypeptide: tRNA pseudouridine synthase A (265 aa).

Asp-58 (nucleophile) is an active-site residue. Tyr-116 provides a ligand contact to substrate.

It belongs to the tRNA pseudouridine synthase TruA family. As to quaternary structure, homodimer.

The enzyme catalyses uridine(38/39/40) in tRNA = pseudouridine(38/39/40) in tRNA. Its function is as follows. Formation of pseudouridine at positions 38, 39 and 40 in the anticodon stem and loop of transfer RNAs. This Neisseria meningitidis serogroup C (strain 053442) protein is tRNA pseudouridine synthase A.